The chain runs to 286 residues: tRNA (guanine-N(7)-)-methyltransferase (286 aa).

2 positions are modified to phosphoserine: S7 and S59. S-adenosyl-L-methionine is bound by residues G103, E126–I127, N161–A162, and C181. D184 is a catalytic residue. T259 to E261 contacts S-adenosyl-L-methionine.

This sequence belongs to the class I-like SAM-binding methyltransferase superfamily. TrmB family. Forms a complex with TRM82.

Its subcellular location is the nucleus. The enzyme catalyses guanosine(46) in tRNA + S-adenosyl-L-methionine = N(7)-methylguanosine(46) in tRNA + S-adenosyl-L-homocysteine. Its pathway is tRNA modification; N(7)-methylguanine-tRNA biosynthesis. In terms of biological role, methyltransferase that catalyzes the formation of N(7)-methylguanine at position 46 (m7G46) in tRNA, a modification required to maintain stability of tRNAs; its absence resulting in tRNA decay. Both the D-stem and T-stem structures of tRNAs are required for efficient methyltransferase activity. The chain is tRNA (guanine-N(7)-)-methyltransferase from Saccharomyces cerevisiae (strain RM11-1a) (Baker's yeast).